A 37-amino-acid chain; its full sequence is Mu-thomitoxin-Hme1a (37 aa).

Cystine bridges form between cysteine 2-cysteine 18, cysteine 9-cysteine 22, and cysteine 17-cysteine 33. Phenylalanine 37 is subject to Phenylalanine amide.

This sequence belongs to the neurotoxin 01 (U2-agtx) family. In terms of processing, contains 3 disulfide bonds. In terms of tissue distribution, expressed by the venom gland.

The protein resides in the secreted. Blocks the Nav1.2/SCN2A, Nav1.4/SCN4A, and Nav1.6/SCN8A sodium channels. Reduces the peak amplitude of the sodium current and negatively shifts the steady-state inactivation process. Does not shift the threshold potential of activation or the voltage corresponding to maximal current. Does not change the reversal potential of the sodium current. May act on site 1 of the receptor. The chain is Mu-thomitoxin-Hme1a from Heriaeus mellotteei (Crab spider).